A 424-amino-acid polypeptide reads, in one-letter code: tRNA(Ile)-lysidine synthase (424 aa).

26 to 31 is an ATP binding site; it reads SGGIDS.

The protein belongs to the tRNA(Ile)-lysidine synthase family.

The protein localises to the cytoplasm. It carries out the reaction cytidine(34) in tRNA(Ile2) + L-lysine + ATP = lysidine(34) in tRNA(Ile2) + AMP + diphosphate + H(+). Ligates lysine onto the cytidine present at position 34 of the AUA codon-specific tRNA(Ile) that contains the anticodon CAU, in an ATP-dependent manner. Cytidine is converted to lysidine, thus changing the amino acid specificity of the tRNA from methionine to isoleucine. The protein is tRNA(Ile)-lysidine synthase of Streptococcus agalactiae serotype V (strain ATCC BAA-611 / 2603 V/R).